Consider the following 131-residue polypeptide: Translation initiation factor 5A (131 aa).

Lysine 37 bears the Hypusine mark.

The protein belongs to the eIF-5A family.

The protein resides in the cytoplasm. In terms of biological role, functions by promoting the formation of the first peptide bond. The sequence is that of Translation initiation factor 5A (eIF5A) from Methanococcus aeolicus (strain ATCC BAA-1280 / DSM 17508 / OCM 812 / Nankai-3).